Reading from the N-terminus, the 324-residue chain is Proto-oncogene Mas (324 aa).

The Extracellular portion of the chain corresponds to 1–35; that stretch reads MDQSNMTSLAEEKAMNTSSRNASLGSSHPPIPIVH. N-linked (GlcNAc...) asparagine glycans are attached at residues Asn5, Asn16, and Asn21. A helical membrane pass occupies residues 36 to 60; the sequence is WVIMSISPLGFVENGILLWFLCFRM. At 61-64 the chain is on the cytoplasmic side; it reads RRNP. The chain crosses the membrane as a helical span at residues 65–86; it reads FTVYITHLSIADISLLFCIFIL. At 87–103 the chain is on the extracellular side; that stretch reads SIDYALDYELSSGHHYT. A helical transmembrane segment spans residues 104 to 127; the sequence is IVTLSVTFLFGYNTGLYLLTAISV. The Cytoplasmic segment spans residues 128-148; sequence ERCLSVLYPIWYRCHRPKHQS. Residues 149-171 traverse the membrane as a helical segment; sequence AFVCALLWALSCLVTTMEYVMCI. Topologically, residues 172 to 184 are extracellular; the sequence is DSGEESHSRSDCR. A helical membrane pass occupies residues 185–205; it reads AVIIFIAILSFLVFTPLMLVS. Topologically, residues 206 to 223 are cytoplasmic; the sequence is STILVVKIRKNTWASHSS. A helical transmembrane segment spans residues 224–244; it reads KLYIVIMVTIIIFLIFAMPMR. The Extracellular portion of the chain corresponds to 245 to 262; the sequence is VLYLLYYEYWSAFGNLHN. The helical transmembrane segment at 263–283 threads the bilayer; it reads ISLLFSTINSSANPFIYFFVG. At 284 to 324 the chain is on the cytoplasmic side; that stretch reads SSKKKRFRESLKVVLTRAFKDEMQPRRQEGNGNTVSIETVV.

It belongs to the G-protein coupled receptor 1 family. Interacts with AGTR1. Interacts with FLNA (via filamin repeat 21); increases PKA-mediated phosphorylation of FLNA.

Its subcellular location is the cell membrane. Acts specifically as a functional antagonist of AGTR1 (angiotensin-2 type 1 receptor), although it up-regulates AGTR1 receptor levels. Positive regulation of AGTR1 levels occurs through activation of the G-proteins GNA11 and GNAQ, and stimulation of the protein kinase C signaling cascade. The antagonist effect on AGTR1 function is probably due to AGTR1 being physically altered by MAS1. Receptor for angiotensin 1-7. The protein is Proto-oncogene Mas (Mas1) of Mus musculus (Mouse).